The sequence spans 66 residues: UPF0434 protein Nwi_0075 (66 aa).

This sequence belongs to the UPF0434 family.

In Nitrobacter winogradskyi (strain ATCC 25391 / DSM 10237 / CIP 104748 / NCIMB 11846 / Nb-255), this protein is UPF0434 protein Nwi_0075.